A 113-amino-acid polypeptide reads, in one-letter code: U11-theraphotoxin-Hhn1k (113 aa).

Residues 1 to 21 (MNTVRVTFLLVFVLAVSLGQA) form the signal peptide. A propeptide spanning residues 22 to 74 (DKDENRMEMQEKTEQGKSYLDFAENLLLQKLEELEAKLLEEDSEESRNSRQKR) is cleaved from the precursor. Residues 61-83 (EEDSEESRNSRQKRCIGEGVPCD) are disordered. Disulfide bonds link Cys-75–Cys-90, Cys-82–Cys-95, and Cys-89–Cys-110.

This sequence belongs to the neurotoxin 14 (magi-1) family. 01 (HNTX-16) subfamily. As to expression, expressed by the venom gland.

It is found in the secreted. In terms of biological role, probable ion channel inhibitor. The chain is U11-theraphotoxin-Hhn1k from Cyriopagopus hainanus (Chinese bird spider).